The sequence spans 995 residues: Beta-agarase A (995 aa).

Residues 1 to 20 (MKIKFLSAAIAASLALPLSA) form the signal peptide. Positions 936–972 (GTNIGVSHSGPEAPDPGEPVDPPIDPPTPPTGGVTGG) are disordered. Residues 948–965 (APDPGEPVDPPIDPPTPP) are compositionally biased toward pro residues.

It belongs to the glycosyl hydrolase 50 family.

It catalyses the reaction Hydrolysis of (1-&gt;4)-beta-D-galactosidic linkages in agarose, giving the tetramer as the predominant product.. Its function is as follows. Hydrolyzes agarose and also neoagarotetraose to yield neoagarobiose. This chain is Beta-agarase A (agaA), found in Vibrio sp. (strain JT0107).